The following is a 460-amino-acid chain: MSLRIYNTLSRALEEFSPLEPGHVRMYVCGMTIYDLCHIGHARMMMAFDVVQRWLKARGLKVTYVRNITDIDDKIIGRALERGITIGALTDEMIAAMHADIGALGLEPPTLEPRATQYVPRMLALIGQLQAKGLAYRASNGDVNYAVRKFQGYGKLSGKSPDELRAGARVALADGKTDPLDFVLWKSAKPHEPPEAQWDSDYGRGRPGWHIECSAMSCATLGESFDIHGGGADLQFPHHENEIAQSEGVTGKPLARFWLHNGFVRVDNEKMSKSLGNFFTIRDVLAQYDAQTVRFFIVRAHYRSALNYSDAHLDDARQALKRLYTALSLVPPAPVAAIDWTEPHAARFQAAMDEDFGTPEAVAVLFDLAVEVNKSHSPQRAGLLKALGGCLGLLQGDPRAFLQAGAGTPDEADIQARIAARAAAKAQRDFAEADRIRNALLAQGIVLKDGATGTTWEAAQ.

Cysteine 29 is a binding site for Zn(2+). A 'HIGH' region motif is present at residues 31–41; sequence MTIYDLCHIGH. Zn(2+)-binding residues include cysteine 213, histidine 238, and glutamate 242. The 'KMSKS' region signature appears at 270–274; it reads KMSKS. Residue lysine 273 coordinates ATP.

It belongs to the class-I aminoacyl-tRNA synthetase family. As to quaternary structure, monomer. The cofactor is Zn(2+).

Its subcellular location is the cytoplasm. The enzyme catalyses tRNA(Cys) + L-cysteine + ATP = L-cysteinyl-tRNA(Cys) + AMP + diphosphate. This chain is Cysteine--tRNA ligase, found in Verminephrobacter eiseniae (strain EF01-2).